The primary structure comprises 294 residues: UDP-3-O-acyl-N-acetylglucosamine deacetylase (294 aa).

Positions 75, 232, and 236 each coordinate Zn(2+). His259 (proton donor) is an active-site residue.

The protein belongs to the LpxC family. Zn(2+) serves as cofactor.

It carries out the reaction a UDP-3-O-[(3R)-3-hydroxyacyl]-N-acetyl-alpha-D-glucosamine + H2O = a UDP-3-O-[(3R)-3-hydroxyacyl]-alpha-D-glucosamine + acetate. Its pathway is glycolipid biosynthesis; lipid IV(A) biosynthesis; lipid IV(A) from (3R)-3-hydroxytetradecanoyl-[acyl-carrier-protein] and UDP-N-acetyl-alpha-D-glucosamine: step 2/6. In terms of biological role, catalyzes the hydrolysis of UDP-3-O-myristoyl-N-acetylglucosamine to form UDP-3-O-myristoylglucosamine and acetate, the committed step in lipid A biosynthesis. This Campylobacter jejuni subsp. doylei (strain ATCC BAA-1458 / RM4099 / 269.97) protein is UDP-3-O-acyl-N-acetylglucosamine deacetylase.